A 134-amino-acid chain; its full sequence is Beta-synuclein (134 aa).

A run of 2 repeats spans residues 20–30 (EKTKQGVTEAA) and 31–41 (EKTKEGVLYVG). The 4 X 11 AA tandem repeats of [EGS]-K-T-K-[EQ]-[GQ]-V-X(4) stretch occupies residues 20 to 67 (EKTKQGVTEAAEKTKEGVLYVGSKTKEGVVQGVASVAEKTKEQASHLG). One copy of the 3; approximate repeat lies at 42–56 (SKTKEGVVQGVASVA). Residues 57-67 (EKTKEQASHLG) form repeat 4. Residues 97–134 (EVAQEAAEEPLIEPLMEPEGESYEEQPQEEYQEYEPEA) are disordered. The span at 98–134 (VAQEAAEEPLIEPLMEPEGESYEEQPQEEYQEYEPEA) shows a compositional bias: acidic residues. Ser118 bears the Phosphoserine; by BARK1, CK2 and GRK5 mark.

This sequence belongs to the synuclein family. Phosphorylated. Phosphorylation by G-protein coupled receptor kinases (GRK) is more efficient than phosphorylation by CK1, CK2 and CaM-kinase II. As to expression, specifically present in synapses around neurons but not in glial cells.

It is found in the cytoplasm. Functionally, may be involved in neuronal plasticity. The chain is Beta-synuclein (SNCB) from Bos taurus (Bovine).